The primary structure comprises 616 residues: Dihydroxy-acid dehydratase (616 aa).

Aspartate 81 provides a ligand contact to Mg(2+). Cysteine 122 is a [2Fe-2S] cluster binding site. Mg(2+) contacts are provided by aspartate 123 and lysine 124. At lysine 124 the chain carries N6-carboxylysine. Cysteine 195 lines the [2Fe-2S] cluster pocket. Residue glutamate 491 participates in Mg(2+) binding. The active-site Proton acceptor is the serine 517.

This sequence belongs to the IlvD/Edd family. In terms of assembly, homodimer. It depends on [2Fe-2S] cluster as a cofactor. Mg(2+) is required as a cofactor.

It catalyses the reaction (2R)-2,3-dihydroxy-3-methylbutanoate = 3-methyl-2-oxobutanoate + H2O. The catalysed reaction is (2R,3R)-2,3-dihydroxy-3-methylpentanoate = (S)-3-methyl-2-oxopentanoate + H2O. Its pathway is amino-acid biosynthesis; L-isoleucine biosynthesis; L-isoleucine from 2-oxobutanoate: step 3/4. The protein operates within amino-acid biosynthesis; L-valine biosynthesis; L-valine from pyruvate: step 3/4. In terms of biological role, functions in the biosynthesis of branched-chain amino acids. Catalyzes the dehydration of (2R,3R)-2,3-dihydroxy-3-methylpentanoate (2,3-dihydroxy-3-methylvalerate) into 2-oxo-3-methylpentanoate (2-oxo-3-methylvalerate) and of (2R)-2,3-dihydroxy-3-methylbutanoate (2,3-dihydroxyisovalerate) into 2-oxo-3-methylbutanoate (2-oxoisovalerate), the penultimate precursor to L-isoleucine and L-valine, respectively. The sequence is that of Dihydroxy-acid dehydratase from Escherichia fergusonii (strain ATCC 35469 / DSM 13698 / CCUG 18766 / IAM 14443 / JCM 21226 / LMG 7866 / NBRC 102419 / NCTC 12128 / CDC 0568-73).